The following is a 271-amino-acid chain: Regulatory protein RecX (271 aa).

This sequence belongs to the RecX family.

The protein resides in the cytoplasm. Functionally, modulates RecA activity. This is Regulatory protein RecX from Lactobacillus delbrueckii subsp. bulgaricus (strain ATCC BAA-365 / Lb-18).